The primary structure comprises 668 residues: Threonine--tRNA ligase (668 aa).

Residues 1 to 64 (MSQAISLTFP…TDGKIEIITR (64 aa)) enclose the TGS domain. The interval 245–553 (DHRKLGREMD…LIENFAGHMP (309 aa)) is catalytic. Zn(2+) contacts are provided by Cys-347, His-398, and His-530.

It belongs to the class-II aminoacyl-tRNA synthetase family. As to quaternary structure, homodimer. Requires Zn(2+) as cofactor.

It is found in the cytoplasm. The catalysed reaction is tRNA(Thr) + L-threonine + ATP = L-threonyl-tRNA(Thr) + AMP + diphosphate + H(+). Catalyzes the attachment of threonine to tRNA(Thr) in a two-step reaction: L-threonine is first activated by ATP to form Thr-AMP and then transferred to the acceptor end of tRNA(Thr). Also edits incorrectly charged L-seryl-tRNA(Thr). This chain is Threonine--tRNA ligase, found in Rhizobium etli (strain CIAT 652).